Reading from the N-terminus, the 200-residue chain is MKHAPLVDQLINAFTCLPGVGPRSAQRMAYALLDRGRESGRRLGDALHAAMDGVQHCERCRNYAQSTLCPVCEDPRRDASLVCIVATPGDVLAFEQSGEYRGQYFVLMGELSPLDGIGPRELGLDVLEQRLNEGQISELILATGTTVEGEATAHYVLGLAQDAGVGVSRIAQGVPMGGELEFVDGATLAQALKGRRPFDA.

The C4-type zinc-finger motif lies at 57–72 (CERCRNYAQSTLCPVC). The Toprim domain maps to 80–175 (SLVCIVATPG…GVSRIAQGVP (96 aa)).

The protein belongs to the RecR family.

Its function is as follows. May play a role in DNA repair. It seems to be involved in an RecBC-independent recombinational process of DNA repair. It may act with RecF and RecO. The sequence is that of Recombination protein RecR from Alcanivorax borkumensis (strain ATCC 700651 / DSM 11573 / NCIMB 13689 / SK2).